The primary structure comprises 196 residues: Small ribosomal subunit protein uS4c (196 aa).

Residues 15–43 are disordered; sequence LGALPGLTRKTPKSGSNQKKKFHSGKKEQ. An S4 RNA-binding domain is found at 89–150; sequence MRLDNILFRL…NQRSKRLVQN (62 aa).

Belongs to the universal ribosomal protein uS4 family. Part of the 30S ribosomal subunit. Contacts protein S5. The interaction surface between S4 and S5 is involved in control of translational fidelity.

The protein resides in the plastid. It localises to the chloroplast. In terms of biological role, one of the primary rRNA binding proteins, it binds directly to 16S rRNA where it nucleates assembly of the body of the 30S subunit. Functionally, with S5 and S12 plays an important role in translational accuracy. The protein is Small ribosomal subunit protein uS4c (rps4) of Melinis repens (Red Natal grass).